A 282-amino-acid polypeptide reads, in one-letter code: tRNA N(3)-cytidine methyltransferase METTL6 (282 aa).

S-adenosyl-L-methionine-binding residues include tryptophan 45, tyrosine 49, glycine 87, aspartate 110, aspartate 136, leucine 137, and isoleucine 157.

This sequence belongs to the methyltransferase superfamily. METL family. Monomer. Interacts with SARS1/SerRS; interaction is mediated via tRNA(Ser) and is required for N(3)-methylcytidine methylation.

It localises to the cytoplasm. The protein resides in the nucleus. The enzyme catalyses cytidine(32) in tRNA(Ser) + S-adenosyl-L-methionine = N(3)-methylcytidine(32) in tRNA(Ser) + S-adenosyl-L-homocysteine + H(+). Its function is as follows. S-adenosyl-L-methionine-dependent methyltransferase that mediates N(3)-methylcytidine modification of residue 32 of the tRNA anticodon loop of tRNA(Ser), including tRNA(Ser)(UGA) and tRNA(Ser)(GCU). Interaction with SARS1/SerRS is required for N(3)-methylcytidine methylation. The protein is tRNA N(3)-cytidine methyltransferase METTL6 of Mus musculus (Mouse).